The primary structure comprises 674 residues: Electrogenic aspartate/glutamate antiporter SLC25A13, mitochondrial (674 aa).

Ala-2 is modified (N-acetylalanine). A regulatory N-terminal domain region spans residues 2 to 295; the sequence is AAAKVALTKR…TLADIERIAP (294 aa). Residues 2–331 are Mitochondrial intermembrane-facing; that stretch reads AAAKVALTKR…LLQVAESAYR (330 aa). EF-hand domains follow at residues 51–86, 87–122, 123–157, and 158–193; these read SQPNPKTVELLSGVADQTKDGLISFQEFVAFESVLC, APDALFMVAFQLFDKAGKGEVTFEDVKQVFGQTTIH, QHIPFNWDSEFVQLHFGKERKRHLTYAEFTQFLLE, and IQLEHAKQAFVQRDNASTGRVTAIDFRDIMVTIRPH. Ca(2+)-binding residues include Asp-66, Thr-68, Asp-70, Leu-72, and Glu-77. The linker loop domain stretch occupies residues 296–311; that stretch reads LEEGTLPFNLAEAQRQ. The carrier domain stretch occupies residues 321-611; that stretch reads VLLQVAESAY…LQRWFYIDFG (291 aa). Solcar repeat units follow at residues 326-418, 426-510, and 518-605; these read AESA…VRDK, VPLA…ARAS, and VSPG…LQRW. The helical transmembrane segment at 332–349 threads the bilayer; it reads FGLGSVAGAVGATAVYPI. Residues 350–392 lie on the Mitochondrial matrix side of the membrane; that stretch reads DLVKTRMQNQRSTGSFVGELMYKNSFDCFKKVLRYEGFFGLYR. Lys-353 and Lys-372 each carry N6-acetyllysine. Residues 393-412 form a helical membrane-spanning segment; it reads GLLPQLLGVAPEKAIKLTVN. The Mitochondrial intermembrane portion of the chain corresponds to 413–435; the sequence is DFVRDKFMHKDGSVPLAAEILAG. A helical membrane pass occupies residues 436–449; the sequence is GCAGGSQVIFTNPL. The Mitochondrial matrix segment spans residues 450 to 484; that stretch reads EIVKIRLQVAGEITTGPRVSALSVVRDLGFFGIYK. Lys-453 bears the N6-methyllysine mark. The residue at position 484 (Lys-484) is an N6-acetyllysine; alternate. Lys-484 carries the N6-succinyllysine; alternate modification. A helical membrane pass occupies residues 485 to 504; the sequence is GAKACFLRDIPFSAIYFPCY. At 505–523 the chain is on the mitochondrial intermembrane side; sequence AHARASFANEDGQVSPGSL. A helical transmembrane segment spans residues 524 to 541; sequence LLAGAIAGMPAASLVTPA. At 542–580 the chain is on the mitochondrial matrix side; it reads DVIKTRLQVAARAGQTTYSGVIDCFKKILREEGPKALWK. Lys-580 is modified (N6-succinyllysine). Residues 581–599 form a helical membrane-spanning segment; that stretch reads GAARVFRSSPQFGVTLLTY. Over 600-674 the chain is Mitochondrial intermembrane; that stretch reads ELLQRWFYID…PTSEAIGGGP (75 aa). The interval 612 to 674 is C-terminal domain; sequence GVKPMGSEPV…PTSEAIGGGP (63 aa). Position 661 is an N6-acetyllysine (Lys-661).

This sequence belongs to the mitochondrial carrier (TC 2.A.29) family. Homodimer (via N-terminus).

The protein resides in the mitochondrion inner membrane. The enzyme catalyses L-aspartate(in) + L-glutamate(out) + H(+)(out) = L-aspartate(out) + L-glutamate(in) + H(+)(in). It carries out the reaction 3-sulfino-L-alanine(out) + L-glutamate(in) + H(+)(in) = 3-sulfino-L-alanine(in) + L-glutamate(out) + H(+)(out). The catalysed reaction is 3-sulfino-L-alanine(out) + L-aspartate(in) = 3-sulfino-L-alanine(in) + L-aspartate(out). In terms of biological role, mitochondrial electrogenic aspartate/glutamate antiporter that favors efflux of aspartate and entry of glutamate and proton within the mitochondria as part of the malate-aspartate shuttle. Also mediates the uptake of L-cysteinesulfinate (3-sulfino-L-alanine) by mitochondria in exchange of L-glutamate and proton. Can also exchange L-cysteinesulfinate with aspartate in their anionic form without any proton translocation. Lacks transport activity towards gamma-aminobutyric acid (GABA). This is Electrogenic aspartate/glutamate antiporter SLC25A13, mitochondrial from Macaca fascicularis (Crab-eating macaque).